The chain runs to 843 residues: Protein P (843 aa).

Residues 1-177 (MPLSYQHFRK…FCGSPYSWEQ (177 aa)) form a terminal protein domain (TP) region. The segment at 178–346 (DLQHGRLVFQ…YCLSHIVNLI (169 aa)) is spacer. Positions 219-269 (RKSRLGPQPAQGQLAGRQQGGSGSIRARVHPSPWGTVGVEPSGSGPTHNCA) are disordered. Residues 223–235 (LGPQPAQGQLAGR) are compositionally biased toward low complexity. A polymerase/reverse transcriptase domain (RT) region spans residues 347 to 690 (EDWGPCTEHG…YLNLYPVARQ (344 aa)). The Reverse transcriptase domain maps to 357–600 (EHRIRTPRTP…YSLNFMGYVI (244 aa)). Mg(2+) is bound by residues D429, D551, and D552.

It belongs to the hepadnaviridae P protein family.

It catalyses the reaction DNA(n) + a 2'-deoxyribonucleoside 5'-triphosphate = DNA(n+1) + diphosphate. It carries out the reaction Endonucleolytic cleavage to 5'-phosphomonoester.. Activated by host HSP70 and HSP40 in vitro to be able to bind the epsilon loop of the pgRNA. Because deletion of the RNase H region renders the protein partly chaperone-independent, the chaperones may be needed indirectly to relieve occlusion of the RNA-binding site by this domain. Inhibited by several reverse-transcriptase inhibitors: Lamivudine, Adefovir and Entecavir. Functionally, multifunctional enzyme that converts the viral RNA genome into dsDNA in viral cytoplasmic capsids. This enzyme displays a DNA polymerase activity that can copy either DNA or RNA templates, and a ribonuclease H (RNase H) activity that cleaves the RNA strand of RNA-DNA heteroduplexes in a partially processive 3'- to 5'-endonucleasic mode. Neo-synthesized pregenomic RNA (pgRNA) are encapsidated together with the P protein, and reverse-transcribed inside the nucleocapsid. Initiation of reverse-transcription occurs first by binding the epsilon loop on the pgRNA genome, and is initiated by protein priming, thereby the 5'-end of (-)DNA is covalently linked to P protein. Partial (+)DNA is synthesized from the (-)DNA template and generates the relaxed circular DNA (RC-DNA) genome. After budding and infection, the RC-DNA migrates in the nucleus, and is converted into a plasmid-like covalently closed circular DNA (cccDNA). The activity of P protein does not seem to be necessary for cccDNA generation, and is presumably released from (+)DNA by host nuclear DNA repair machinery. This chain is Protein P, found in Hepatitis B virus genotype B2 subtype adw (isolate China/patient4/1996) (HBV-B).